The chain runs to 386 residues: Formate-dependent phosphoribosylglycinamide formyltransferase (386 aa).

Residues 15–16 (EL) and Glu-75 each bind N(1)-(5-phospho-beta-D-ribosyl)glycinamide. ATP-binding positions include Arg-107, Lys-148, 153-158 (SSGKGQ), 188-191 (EQFI), and Glu-196. In terms of domain architecture, ATP-grasp spans 112 to 301 (ALAAQQLNLQ…EFELHLRAIV (190 aa)). Mg(2+) is bound by residues Glu-260 and Glu-272. Residues Asp-279, Lys-349, and 356–357 (RR) contribute to the N(1)-(5-phospho-beta-D-ribosyl)glycinamide site.

The protein belongs to the PurK/PurT family. Homodimer.

The enzyme catalyses N(1)-(5-phospho-beta-D-ribosyl)glycinamide + formate + ATP = N(2)-formyl-N(1)-(5-phospho-beta-D-ribosyl)glycinamide + ADP + phosphate + H(+). Its pathway is purine metabolism; IMP biosynthesis via de novo pathway; N(2)-formyl-N(1)-(5-phospho-D-ribosyl)glycinamide from N(1)-(5-phospho-D-ribosyl)glycinamide (formate route): step 1/1. In terms of biological role, involved in the de novo purine biosynthesis. Catalyzes the transfer of formate to 5-phospho-ribosyl-glycinamide (GAR), producing 5-phospho-ribosyl-N-formylglycinamide (FGAR). Formate is provided by PurU via hydrolysis of 10-formyl-tetrahydrofolate. The polypeptide is Formate-dependent phosphoribosylglycinamide formyltransferase (Francisella tularensis subsp. novicida (strain U112)).